A 351-amino-acid chain; its full sequence is Peptide chain release factor 1 (351 aa).

Residue glutamine 229 is modified to N5-methylglutamine.

The protein belongs to the prokaryotic/mitochondrial release factor family. Methylated by PrmC. Methylation increases the termination efficiency of RF1.

It localises to the cytoplasm. Functionally, peptide chain release factor 1 directs the termination of translation in response to the peptide chain termination codons UAG and UAA. This Cereibacter sphaeroides (strain ATCC 17029 / ATH 2.4.9) (Rhodobacter sphaeroides) protein is Peptide chain release factor 1.